The chain runs to 272 residues: Small ribosomal subunit protein uS2 (272 aa).

The disordered stretch occupies residues 244–272 (EDDYEGAEGDLDLDSANEEESLEDNNEEE).

Belongs to the universal ribosomal protein uS2 family.

This Trichodesmium erythraeum (strain IMS101) protein is Small ribosomal subunit protein uS2.